The chain runs to 71 residues: Protein Tlp homolog (71 aa).

The segment at 30–56 is disordered; the sequence is ETLQNNSLSRDQRQAIMEKNKRREESI. Over residues 39–56 the composition is skewed to basic and acidic residues; the sequence is RDQRQAIMEKNKRREESI.

It belongs to the Tlp family.

This chain is Protein Tlp homolog, found in Desulforamulus reducens (strain ATCC BAA-1160 / DSM 100696 / MI-1) (Desulfotomaculum reducens).